Consider the following 165-residue polypeptide: Methylated-DNA--protein-cysteine methyltransferase, constitutive (165 aa).

The active-site Nucleophile; methyl group acceptor is the cysteine 130.

The protein belongs to the MGMT family.

The protein resides in the cytoplasm. It carries out the reaction a 6-O-methyl-2'-deoxyguanosine in DNA + L-cysteinyl-[protein] = S-methyl-L-cysteinyl-[protein] + a 2'-deoxyguanosine in DNA. The enzyme catalyses a 4-O-methyl-thymidine in DNA + L-cysteinyl-[protein] = a thymidine in DNA + S-methyl-L-cysteinyl-[protein]. Involved in the cellular defense against the biological effects of O6-methylguanine (O6-MeG) and O4-methylthymine (O4-MeT) in DNA. Repairs the methylated nucleobase in DNA by stoichiometrically transferring the methyl group to a cysteine residue in the enzyme. This is a suicide reaction: the enzyme is irreversibly inactivated. In Bacillus subtilis (strain 168), this protein is Methylated-DNA--protein-cysteine methyltransferase, constitutive.